Here is a 127-residue protein sequence, read N- to C-terminus: Flagellar assembly factor FliW (127 aa).

It belongs to the FliW family. Interacts with translational regulator CsrA and flagellin(s).

Its subcellular location is the cytoplasm. In terms of biological role, acts as an anti-CsrA protein, binds CsrA and prevents it from repressing translation of its target genes, one of which is flagellin. Binds to flagellin and participates in the assembly of the flagellum. This Campylobacter concisus (strain 13826) protein is Flagellar assembly factor FliW.